The primary structure comprises 654 residues: Probable Xaa-Pro aminopeptidase P (654 aa).

The Mn(2+) site is built by Asp449, Asp460, Glu558, and Glu572.

It belongs to the peptidase M24B family. Mn(2+) is required as a cofactor.

The enzyme catalyses Release of any N-terminal amino acid, including proline, that is linked to proline, even from a dipeptide or tripeptide.. Functionally, catalyzes the removal of a penultimate prolyl residue from the N-termini of peptides. In Neosartorya fischeri (strain ATCC 1020 / DSM 3700 / CBS 544.65 / FGSC A1164 / JCM 1740 / NRRL 181 / WB 181) (Aspergillus fischerianus), this protein is Probable Xaa-Pro aminopeptidase P (ampp).